We begin with the raw amino-acid sequence, 143 residues long: UPF0179 protein PTO0851 (143 aa).

It belongs to the UPF0179 family.

The polypeptide is UPF0179 protein PTO0851 (Picrophilus torridus (strain ATCC 700027 / DSM 9790 / JCM 10055 / NBRC 100828 / KAW 2/3)).